The following is a 308-amino-acid chain: Pycsar effector protein PaPycTIR (308 aa).

54–143 is an a nucleoside 3',5'-cyclic phosphate binding site; that stretch reads LITEDAEDSE…RQVTRQLVDR (90 aa). Residues 160 to 278 are TIR-like; the sequence is VFIICSVEAL…DLKGLTTIGY (119 aa).

The protein localises to the cytoplasm. The catalysed reaction is NAD(+) + H2O = ADP-D-ribose + nicotinamide + H(+). Its function is as follows. Pycsar (pyrimidine cyclase system for antiphage resistance) provides immunity against bacteriophage. The pyrimidine cyclase (PycC) synthesizes cyclic nucleotides in response to infection; these serve as specific second messenger signals. The signals activate the adjacent effector, leading to bacterial cell death and abortive phage infection. A clade A Pycsar system. The effector gene of a two-gene Pycsar system. Expression of this and adjacent uridylate cyclase PaPycC (AC P0DV40) probably confers resistance to bacteriophage. The genes are probably only expressed in response to bacteriophage infection. Probably only responds to cUMP (produced by its cognate NTP cyclase), acts by depleting cellular NAD(+) levels. The chain is Pycsar effector protein PaPycTIR from Pseudomonas aeruginosa.